The following is a 372-amino-acid chain: Spermidine/putrescine import ATP-binding protein PotA (372 aa).

The 231-residue stretch at 11-241 (IELRSITKSY…PANLFVARFI (231 aa)) folds into the ABC transporter domain. An ATP-binding site is contributed by 43-50 (GPSGCGKT).

Belongs to the ABC transporter superfamily. Spermidine/putrescine importer (TC 3.A.1.11.1) family. The complex is composed of two ATP-binding proteins (PotA), two transmembrane proteins (PotB and PotC) and a solute-binding protein (PotD).

Its subcellular location is the cell inner membrane. It catalyses the reaction ATP + H2O + polyamine-[polyamine-binding protein]Side 1 = ADP + phosphate + polyamineSide 2 + [polyamine-binding protein]Side 1.. In terms of biological role, part of the ABC transporter complex PotABCD involved in spermidine/putrescine import. Responsible for energy coupling to the transport system. The polypeptide is Spermidine/putrescine import ATP-binding protein PotA (Aggregatibacter actinomycetemcomitans (Actinobacillus actinomycetemcomitans)).